The primary structure comprises 534 residues: EH domain-containing protein 1 (534 aa).

Methionine 1 carries the N-acetylmethionine modification. The Dynamin-type G domain maps to 55-286 (FDNKPMVLLV…DLFKDIQSLP (232 aa)). Residues 65–72 (GQYSTGKT) form a G1 motif region. Residue 65-72 (GQYSTGKT) coordinates ATP. The interval 91–92 (EP) is G2 motif. The interval 153 to 156 (DTPG) is G3 motif. A coiled-coil region spans residues 198–227 (DEFSEVIKALKNHEDKIRVVLNKADQIETQ). The interval 219 to 222 (NKAD) is G4 motif. An ATP-binding site is contributed by lysine 220. Position 243 (isoleucine 243) is a region of interest, G5 motif. Tryptophan 258 is a binding site for ATP. Phosphoserine is present on residues serine 355 and serine 456. An EH domain is found at 444–532 (DKPTYDEIFY…PHLVPPSKRR (89 aa)). One can recognise an EF-hand domain in the interval 476–511 (LPNTVLGKIWKLADVDKDGLLDDEEFALANHLIKVK). The Ca(2+) site is built by aspartate 489, aspartate 491, aspartate 493, and glutamate 500.

The protein belongs to the TRAFAC class dynamin-like GTPase superfamily. Dynamin/Fzo/YdjA family. EHD subfamily. In terms of assembly, homooligomer, and heterooligomer with EHD2, EHD3 and EHD4, ATP-binding is required for heterooligomerization. Interacts (via EH domain) with MICALL1 (via NPF1 motif); the interaction is direct and recruits EHD1 to membranes. Interacts with RAB35; the interaction is indirect through MICALL1 and recruits EHD1 to membranes. Interacts (via EH domain) with PACSIN2 (via NPF motifs); regulates localization to tubular recycling endosome membranes. Interacts with PACSIN1. Interacts with RAB8A. Interacts with FER1L5 (via second C2 domain). Interacts with MYOF. Interacts with ZFYVE20. Interacts (via EH domain) with RAB11FIP2.

Its subcellular location is the recycling endosome membrane. The protein localises to the early endosome membrane. It is found in the cell membrane. The protein resides in the cell projection. It localises to the cilium membrane. Functionally, ATP- and membrane-binding protein that controls membrane reorganization/tubulation upon ATP hydrolysis. Acts in early endocytic membrane fusion and membrane trafficking of recycling endosomes. Recruited to endosomal membranes upon nerve growth factor stimulation, indirectly regulates neurite outgrowth. Plays a role in myoblast fusion. Involved in the unidirectional retrograde dendritic transport of endocytosed BACE1 and in efficient sorting of BACE1 to axons implicating a function in neuronal APP processing. Plays a role in the formation of the ciliary vesicle (CV), an early step in cilium biogenesis. Proposed to be required for the fusion of distal appendage vesicles (DAVs) to form the CV by recruiting SNARE complex component SNAP29. Is required for recruitment of transition zone proteins CEP290, RPGRIP1L, TMEM67 and B9D2, and of IFT20 following DAV reorganization before Rab8-dependent ciliary membrane extension. Required for the loss of CCP110 form the mother centriole essential for the maturation of the basal body during ciliogenesis. The protein is EH domain-containing protein 1 of Pongo abelii (Sumatran orangutan).